Consider the following 131-residue polypeptide: ATP synthase epsilon chain, chloroplastic (131 aa).

It belongs to the ATPase epsilon chain family. As to quaternary structure, F-type ATPases have 2 components, CF(1) - the catalytic core - and CF(0) - the membrane proton channel. CF(1) has five subunits: alpha(3), beta(3), gamma(1), delta(1), epsilon(1). CF(0) has three main subunits: a, b and c.

The protein resides in the plastid. It is found in the chloroplast thylakoid membrane. Functionally, produces ATP from ADP in the presence of a proton gradient across the membrane. This chain is ATP synthase epsilon chain, chloroplastic, found in Guillardia theta (Cryptophyte).